The chain runs to 1133 residues: Early transcription factor large subunit homolog (1133 aa).

A Helicase ATP-binding domain is found at K52–Q352. W99 to S106 lines the ATP pocket. The short motif at D281–H284 is the DEAH box element. The Helicase C-terminal domain maps to M524–A724.

This sequence belongs to the DEAD box helicase family. DEAH subfamily.

It localises to the virion. It carries out the reaction ATP + H2O = ADP + phosphate + H(+). Its function is as follows. Putative initation factor. This is Early transcription factor large subunit homolog from Ornithodoros (relapsing fever ticks).